A 258-amino-acid polypeptide reads, in one-letter code: UPF0246 protein mma_1385 (258 aa).

This sequence belongs to the UPF0246 family.

In Janthinobacterium sp. (strain Marseille) (Minibacterium massiliensis), this protein is UPF0246 protein mma_1385.